A 167-amino-acid chain; its full sequence is uncharacterized protein (167 aa).

A disordered region spans residues 140 to 167; that stretch reads SSEEKKKKKKKKKEKSLHTEREKKKKKF. Over residues 145–154 the composition is skewed to basic residues; sequence KKKKKKKKEK.

This is an uncharacterized protein from Saccharomyces cerevisiae (strain ATCC 204508 / S288c) (Baker's yeast).